The primary structure comprises 88 residues: U-scoloptoxin(XY)-Er1b (88 aa).

An N-terminal signal peptide occupies residues 1-24; it reads MASQVVLSFALVVVLAVFVGQVDS. The segment at 66–88 is disordered; it reads RPELSPGALDDSSEEKDNEASLA. The propeptide occupies 79–88; sequence EEKDNEASLA.

Belongs to the scoloptoxin-XY family. In terms of processing, contains 3 disulfide bonds. In terms of tissue distribution, expressed by the venom gland.

It is found in the secreted. The chain is U-scoloptoxin(XY)-Er1b from Ethmostigmus rubripes (Giant centipede).